We begin with the raw amino-acid sequence, 462 residues long: Zinc transporter zipt-7.2 (462 aa).

A helical transmembrane segment spans residues 2 to 22 (LVKSCIFLSFLAIAAYGQAHL). A disordered region spans residues 39-134 (HHQGHGHAHG…HGHSHGAESA (96 aa)). The segment covering 40 to 51 (HQGHGHAHGGHG) has biased composition (basic residues). Residues 65 to 74 (AAAAEAATAA) show a composition bias toward low complexity. Residues 75–94 (AHDHGHAHDHDHGHAHDHGH) are compositionally biased toward basic and acidic residues. A compositionally biased stretch (basic residues) spans 111–120 (HGHAHDHHGH). Residues 121 to 132 (SHEDHGHSHGAE) show a composition bias toward basic and acidic residues. A helical transmembrane segment spans residues 161 to 181 (AISATLLISAAPCFILMFIPI). The N-linked (GlcNAc...) asparagine glycan is linked to Asn-184. A helical transmembrane segment spans residues 194-214 (VLLAFGSGGLLGDAFLHLIPH). The interval 219 to 239 (GDGHGHSHSHGHSHGGGGHSH) is disordered. A helical membrane pass occupies residues 244 to 264 (MSVGGWVLGGIIAFLTVEKLV). The interval 270 to 307 (EDGHGHSHGHSHGGEKKETKEKDSKDKVAKKEEKPEKD) is disordered. Basic and acidic residues predominate over residues 281-307 (HGGEKKETKEKDSKDKVAKKEEKPEKD). N-linked (GlcNAc...) asparagine glycosylation is present at Asn-326. The next 3 helical transmembrane spans lie at 333 to 353 (IGASFIAGTTVGIVTMITVLV), 376 to 396 (AMLIQLVTALGALSGCVISLF), and 410 to 430 (SWVLPFTAGGFIYIATVSVIP). A glycan (N-linked (GlcNAc...) asparagine) is linked at Asn-435. A helical membrane pass occupies residues 441–461 (TVKEIFAILTGIFLMYLIAIY).

It belongs to the ZIP transporter (TC 2.A.5) family. KE4/Catsup subfamily. In terms of tissue distribution, expressed in somatic tissues.

The protein resides in the membrane. Functionally, zinc transporter. This is Zinc transporter zipt-7.2 from Caenorhabditis elegans.